The primary structure comprises 128 residues: Holo-[acyl-carrier-protein] synthase (128 aa).

2 residues coordinate Mg(2+): Asp-9 and Glu-60.

It belongs to the P-Pant transferase superfamily. AcpS family. Requires Mg(2+) as cofactor.

It is found in the cytoplasm. It carries out the reaction apo-[ACP] + CoA = holo-[ACP] + adenosine 3',5'-bisphosphate + H(+). Transfers the 4'-phosphopantetheine moiety from coenzyme A to a Ser of acyl-carrier-protein. The chain is Holo-[acyl-carrier-protein] synthase from Buchnera aphidicola subsp. Baizongia pistaciae (strain Bp).